The following is a 220-amino-acid chain: MTISLMIEKKCERSFFSMNAIIHGIVLAFGLILPLGVQNVFIFQQGALQKHIWRALPAVISASVCDTLLIVLAVAGVSVIVQELPVFETVMMAGGFLFLLYMGWVTWNIRPNTSQNEKHTFTPKKQAAFAAAVSLLNPHAILDTIGVIGTSSLQYSGLEKWLFMAACIAVSWIWFISLAIAGRLFQTIDTSGRLMLIVNKCSAAVMWAAAGYFGVSLFCN.

6 helical membrane-spanning segments follow: residues 15-35 (FFSMNAIIHGIVLAFGLILPL), 67-87 (TLLIVLAVAGVSVIVQELPVF), 89-109 (TVMMAGGFLFLLYMGWVTWNI), 128-148 (AFAAAVSLLNPHAILDTIGVI), 161-181 (WLFMAACIAVSWIWFISLAIA), and 195-215 (MLIVNKCSAAVMWAAAGYFGV).

This sequence belongs to the LysE/ArgO transporter (TC 2.A.75) family.

The protein localises to the cell membrane. The polypeptide is Putative amino-acid transporter YisU (yisU) (Bacillus subtilis (strain 168)).